The chain runs to 191 residues: Ciliary microtubule-associated protein 3 (191 aa).

In terms of assembly, interacts with proteins involved in ciliary transport, including ARL13B, CETN1, KIF3A, RAB6A, RAB8A, TUBB1 and TUBG1. Interacts with AURKA.

It is found in the cytoplasmic vesicle. It localises to the golgi apparatus. The protein localises to the trans-Golgi network. Its subcellular location is the cytoplasm. In terms of biological role, during primary cilia disassembly, involved in cilia disassembly. Required specifically to control cilia retraction as well as the liberation and duplication of the basal body/centrosome. May act by stimulating AURKA activity at the basal body in a cell cycle-dependent manner. This is Ciliary microtubule-associated protein 3 from Homo sapiens (Human).